The following is a 195-amino-acid chain: uncharacterized protein (195 aa).

4 consecutive transmembrane segments (helical) span residues 89–106 (SWIS…PLLP), 111–128 (HLPL…VWKR), 149–168 (VKIS…VLLL), and 172–194 (LNAL…FLNI).

Its subcellular location is the cell membrane. This is an uncharacterized protein from Bacillus subtilis (strain 168).